Here is a 429-residue protein sequence, read N- to C-terminus: tRNA(Ile2) 2-agmatinylcytidine synthetase TiaS (429 aa).

The segment at 403–429 (KPPERPLHPSKSLEPPSTPIHSDTISL) is disordered.

Belongs to the TiaS family.

It localises to the cytoplasm. It catalyses the reaction cytidine(34) in tRNA(Ile2) + agmatine + ATP + H2O = 2-agmatinylcytidine(34) in tRNA(Ile2) + AMP + 2 phosphate + 2 H(+). ATP-dependent agmatine transferase that catalyzes the formation of 2-agmatinylcytidine (agm2C) at the wobble position (C34) of tRNA(Ile2), converting the codon specificity from AUG to AUA. This chain is tRNA(Ile2) 2-agmatinylcytidine synthetase TiaS, found in Hyperthermus butylicus (strain DSM 5456 / JCM 9403 / PLM1-5).